We begin with the raw amino-acid sequence, 504 residues long: Hexose transporter 1 (504 aa).

The Cytoplasmic segment spans residues 1-29; it reads MTKSSKDICSENEGKKNGKSGFFSTSFKY. The chain crosses the membrane as a helical span at residues 30 to 50; it reads VLSACIASFIFGYQVSVLNTI. Residues 51–78 are Extracellular-facing; it reads KNFIVVEFEWCKGEKDRLNCSNNTIQSS. Residues Cys-61 and Cys-70 are joined by a disulfide bond. The chain crosses the membrane as a helical span at residues 79–99; sequence FLLASVFIGAVLGCGFSGYLV. The Cytoplasmic segment spans residues 100–104; that stretch reads QFGRR. The helical transmembrane segment at 105 to 125 threads the bilayer; the sequence is LSLLIIYNFFFLVSILTSITH. The Extracellular segment spans residues 126–129; sequence HFHT. A helical membrane pass occupies residues 130–150; that stretch reads ILFARLLSGFGIGLVTVSVPM. Topologically, residues 151–165 are cytoplasmic; it reads YISEMTHKDKKGAYG. A helical transmembrane segment spans residues 166 to 186; it reads VMHQLFITFGIFVAVMLGLAM. Alpha-D-glucose is bound at residue Gln-169. Residue Gln-169 participates in beta-D-glucose binding. At 187-207 the chain is on the extracellular side; sequence GEGPKADSTEPLTSFAKLWWR. The chain crosses the membrane as a helical span at residues 208 to 228; it reads LMFLFPSVISLIGILALVVFF. Over 229–293 the chain is Cytoplasmic; the sequence is KEETPYFLFE…SALKIPSYRY (65 aa). Residues 294 to 314 form a helical membrane-spanning segment; the sequence is VIILGCLLSGLQQFTGINVLV. Gln-305, Gln-306, and Asn-311 together coordinate alpha-D-glucose. Gln-305 is a binding site for beta-D-glucose. Residue Asn-311 participates in beta-D-glucose binding. Topologically, residues 315-331 are extracellular; that stretch reads SNSNELYKEFLDSHLIT. A helical transmembrane segment spans residues 332 to 352; that stretch reads ILSVVMTAVNFLMTFPAIYIV. Residue Asn-341 participates in beta-D-glucose binding. Residues 353-358 lie on the Cytoplasmic side of the membrane; sequence EKLGRK. The helical transmembrane segment at 359–379 threads the bilayer; that stretch reads TLLLWGCVGVLVAYLPTAIAN. At 380-392 the chain is on the extracellular side; sequence EINRNSNFVKILS. Residues 393-413 form a helical membrane-spanning segment; that stretch reads IVATFVMIISFAVSYGPVLWI. Alpha-D-glucose is bound at residue Trp-412. The Cytoplasmic portion of the chain corresponds to 414–429; the sequence is YLHEMFPSEIKDSAAS. A helical membrane pass occupies residues 430-450; sequence LASLVNWVCAIIVVFPSDIII. Residues 451–455 are Extracellular-facing; the sequence is KKSPS. Residues 456–476 traverse the membrane as a helical segment; it reads ILFIVFSVMSILTFFFIFFFI. Over 477–504 the chain is Cytoplasmic; that stretch reads KETKGGEIGTSPYITMEERQKHMTKSVV.

It belongs to the major facilitator superfamily. Sugar transporter (TC 2.A.1.1) family. As to quaternary structure, homodimer.

The protein resides in the cell membrane. The enzyme catalyses D-glucose(out) = D-glucose(in). It carries out the reaction D-fructose(out) = D-fructose(in). It catalyses the reaction D-galactose(in) = D-galactose(out). The catalysed reaction is D-mannose(out) = D-mannose(in). The enzyme catalyses D-glucosamine(out) = D-glucosamine(in). It carries out the reaction D-xylose(out) = D-xylose(in). Its activity is regulated as follows. Inhibited by cytochalasin B. Inhibited by compound 3361 (3-O-((undec-10-en)-1-yl)-D-glucose). Inhibited by compound HTI-1. Sodium-independent facilitative hexose transporter. Can transport D-glucose and D-fructose. Can transport D-mannose, D-galactose, D-xylose and D-glucosamine. The protein is Hexose transporter 1 of Plasmodium falciparum (isolate 3D7).